The primary structure comprises 221 residues: Ribosome maturation factor RimM (221 aa).

The segment at Met-1–Lys-23 is disordered. Residues Glu-144–Tyr-221 form the PRC barrel domain.

Belongs to the RimM family. Binds ribosomal protein uS19.

Its subcellular location is the cytoplasm. An accessory protein needed during the final step in the assembly of 30S ribosomal subunit, possibly for assembly of the head region. Essential for efficient processing of 16S rRNA. May be needed both before and after RbfA during the maturation of 16S rRNA. It has affinity for free ribosomal 30S subunits but not for 70S ribosomes. This chain is Ribosome maturation factor RimM, found in Cupriavidus pinatubonensis (strain JMP 134 / LMG 1197) (Cupriavidus necator (strain JMP 134)).